A 278-amino-acid polypeptide reads, in one-letter code: Tumor necrosis factor ligand superfamily member 6 (278 aa).

Residues 1–77 (MQQPVNYPCP…SPLKKKDNIE (77 aa)) lie on the Cytoplasmic side of the membrane. A disordered region spans residues 26-68 (PGSVFSCPSSGPRGPGQRRPPPPPPPPSPLPPPSQPPPLPPLS). Over residues 33–42 (PSSGPRGPGQ) the composition is skewed to low complexity. A compositionally biased stretch (pro residues) spans 43-68 (RRPPPPPPPPSPLPPPSQPPPLPPLS). A helical; Signal-anchor for type II membrane protein transmembrane segment spans residues 78–99 (LWLPVIFFMVLVALVGMGLGMY). The Extracellular portion of the chain corresponds to 100-278 (QLFHLQKELA…SKTFFGLYKL (179 aa)). A glycan (N-linked (GlcNAc...) asparagine) is linked at Asn-116. Polar residues predominate over residues 125–135 (EKQIANPSTPS). The segment at 125 to 147 (EKQIANPSTPSETKKPRSVAHLT) is disordered. A THD domain is found at 142–278 (SVAHLTGNPR…SKTFFGLYKL (137 aa)). Cys-199 and Cys-230 are joined by a disulfide. Residues Asn-247 and Asn-257 are each glycosylated (N-linked (GlcNAc...) asparagine).

Belongs to the tumor necrosis factor family. Homotrimer. Interacts with ARHGAP9, BAIAP2L1, BTK, CACNB3, CACNB4, CRK, DLG2, DNMBP, DOCK4, EPS8L3, FGR, FYB1, FYN, HCK, ITK, ITSN2, KALRN, LYN, MACC1, MIA, MPP4, MYO15A, NCF1, NCK1, NCK2, NCKIPSD, OSTF1, PIK3R1, PSTPIP1, RIMBP3C, SAMSN1, SH3GL3, SH3PXD2B, SH3PXD2A, SH3RF2, SKAP2, SNX33, SNX9, SORBS3, SPTA1, SRC, SRGAP1, SRGAP2, SRGAP3, TEC, TJP3 and YES1. In terms of processing, the soluble form derives from the membrane form by proteolytic processing. The membrane-bound form undergoes two successive intramembrane proteolytic cleavages. The first one is processed by ADAM10 producing an N-terminal fragment, which lacks the receptor-binding extracellular domain. This ADAM10-processed FasL (FasL APL) remnant form is still membrane anchored and further processed by SPPL2A that liberates the FasL intracellular domain (FasL ICD). FasL shedding by ADAM10 is a prerequisite for subsequent intramembrane cleavage by SPPL2A in T-cells. Phosphorylated by FGR on tyrosine residues; this is required for ubiquitination and subsequent internalization. Post-translationally, N-glycosylated. In terms of processing, monoubiquitinated. Expressed in activated splenocytes and thymocytes. Moderate or weak expression found in small intestines, kidney and lung.

The protein resides in the cell membrane. It localises to the cytoplasmic vesicle lumen. It is found in the lysosome lumen. Its subcellular location is the secreted. The protein localises to the nucleus. Its function is as follows. Cytokine that binds to TNFRSF6/FAS, a receptor that transduces the apoptotic signal into cells. Involved in cytotoxic T-cell-mediated apoptosis, natural killer cell-mediated apoptosis and in T-cell development. Initiates fratricidal/suicidal activation-induced cell death (AICD) in antigen-activated T-cells contributing to the termination of immune responses. TNFRSF6/FAS-mediated apoptosis also has a role in the induction of peripheral tolerance. Binds to TNFRSF6B/DcR3, a decoy receptor that blocks apoptosis. Functionally, induces FAS-mediated activation of NF-kappa-B, initiating non-apoptotic signaling pathways. Can induce apoptosis but does not appear to be essential for this process. In terms of biological role, cytoplasmic form induces gene transcription inhibition. The polypeptide is Tumor necrosis factor ligand superfamily member 6 (Faslg) (Rattus norvegicus (Rat)).